Consider the following 709-residue polypeptide: Phosphoribosylformylglycinamidine synthase subunit PurL (709 aa).

H36 is a catalytic residue. Residues Y39 and K80 each contribute to the ATP site. Residue E82 participates in Mg(2+) binding. Residues 83-86 (SHNH) and R105 contribute to the substrate site. H84 functions as the Proton acceptor in the catalytic mechanism. D106 contributes to the Mg(2+) binding site. Substrate is bound at residue Q226. Residue D252 coordinates Mg(2+). 294–296 (ETQ) provides a ligand contact to substrate. ATP contacts are provided by D470 and G507. Residue S510 participates in substrate binding.

It belongs to the FGAMS family. Monomer. Part of the FGAM synthase complex composed of 1 PurL, 1 PurQ and 2 PurS subunits.

The protein resides in the cytoplasm. It carries out the reaction N(2)-formyl-N(1)-(5-phospho-beta-D-ribosyl)glycinamide + L-glutamine + ATP + H2O = 2-formamido-N(1)-(5-O-phospho-beta-D-ribosyl)acetamidine + L-glutamate + ADP + phosphate + H(+). Its pathway is purine metabolism; IMP biosynthesis via de novo pathway; 5-amino-1-(5-phospho-D-ribosyl)imidazole from N(2)-formyl-N(1)-(5-phospho-D-ribosyl)glycinamide: step 1/2. Its function is as follows. Part of the phosphoribosylformylglycinamidine synthase complex involved in the purines biosynthetic pathway. Catalyzes the ATP-dependent conversion of formylglycinamide ribonucleotide (FGAR) and glutamine to yield formylglycinamidine ribonucleotide (FGAM) and glutamate. The FGAM synthase complex is composed of three subunits. PurQ produces an ammonia molecule by converting glutamine to glutamate. PurL transfers the ammonia molecule to FGAR to form FGAM in an ATP-dependent manner. PurS interacts with PurQ and PurL and is thought to assist in the transfer of the ammonia molecule from PurQ to PurL. This Saccharolobus islandicus (strain Y.N.15.51 / Yellowstone #2) (Sulfolobus islandicus) protein is Phosphoribosylformylglycinamidine synthase subunit PurL.